Consider the following 215-residue polypeptide: 3-demethoxyubiquinol 3-hydroxylase (215 aa).

Fe cation-binding residues include Glu-64, Glu-94, His-97, Glu-146, Glu-178, and His-181.

It belongs to the COQ7 family. Fe cation is required as a cofactor.

The protein localises to the cell membrane. The enzyme catalyses a 5-methoxy-2-methyl-3-(all-trans-polyprenyl)benzene-1,4-diol + AH2 + O2 = a 3-demethylubiquinol + A + H2O. It functions in the pathway cofactor biosynthesis; ubiquinone biosynthesis. Its function is as follows. Catalyzes the hydroxylation of 2-nonaprenyl-3-methyl-6-methoxy-1,4-benzoquinol during ubiquinone biosynthesis. This chain is 3-demethoxyubiquinol 3-hydroxylase, found in Azotobacter vinelandii (strain DJ / ATCC BAA-1303).